Reading from the N-terminus, the 384-residue chain is Queuine tRNA-ribosyltransferase (384 aa).

The Proton acceptor role is filled by aspartate 92. Substrate is bound by residues 92–96, aspartate 146, glutamine 190, and glycine 217; that span reads DSGGF. Residues 248 to 254 are RNA binding; it reads GVGRPED. Aspartate 267 (nucleophile) is an active-site residue. Positions 272–276 are RNA binding; important for wobble base 34 recognition; it reads TRHAR. Residues cysteine 305, cysteine 307, cysteine 310, and histidine 337 each coordinate Zn(2+).

The protein belongs to the queuine tRNA-ribosyltransferase family. In terms of assembly, homodimer. Within each dimer, one monomer is responsible for RNA recognition and catalysis, while the other monomer binds to the replacement base PreQ1. It depends on Zn(2+) as a cofactor.

The enzyme catalyses 7-aminomethyl-7-carbaguanine + guanosine(34) in tRNA = 7-aminomethyl-7-carbaguanosine(34) in tRNA + guanine. The protein operates within tRNA modification; tRNA-queuosine biosynthesis. Its function is as follows. Catalyzes the base-exchange of a guanine (G) residue with the queuine precursor 7-aminomethyl-7-deazaguanine (PreQ1) at position 34 (anticodon wobble position) in tRNAs with GU(N) anticodons (tRNA-Asp, -Asn, -His and -Tyr). Catalysis occurs through a double-displacement mechanism. The nucleophile active site attacks the C1' of nucleotide 34 to detach the guanine base from the RNA, forming a covalent enzyme-RNA intermediate. The proton acceptor active site deprotonates the incoming PreQ1, allowing a nucleophilic attack on the C1' of the ribose to form the product. After dissociation, two additional enzymatic reactions on the tRNA convert PreQ1 to queuine (Q), resulting in the hypermodified nucleoside queuosine (7-(((4,5-cis-dihydroxy-2-cyclopenten-1-yl)amino)methyl)-7-deazaguanosine). In Xylella fastidiosa (strain M12), this protein is Queuine tRNA-ribosyltransferase.